The sequence spans 416 residues: Formyl-CoA:oxalate CoA-transferase (416 aa).

CoA contacts are provided by residues Gln17–Ser18, Arg38, Leu72–Lys75, Asn96–His98, His104, and Lys137–Glu140. Asp169 acts as the Nucleophile in catalysis. Gly248–Gln250 is a binding site for substrate. A CoA-binding site is contributed by Gln273–Gln275.

This sequence belongs to the CoA-transferase III family. Frc subfamily. Homodimer.

It carries out the reaction formyl-CoA + oxalate = oxalyl-CoA + formate. It functions in the pathway metabolic intermediate degradation; oxalate degradation; CO(2) and formate from oxalate: step 1/2. In terms of biological role, involved in the catabolism of oxalate and in the adapatation to low pH via the induction of the oxalate-dependent acid tolerance response (ATR). Catalyzes the transfer of the CoA moiety from formyl-CoA to oxalate. This is Formyl-CoA:oxalate CoA-transferase from Escherichia coli O17:K52:H18 (strain UMN026 / ExPEC).